A 109-amino-acid chain; its full sequence is MENITFTSGLNSEMDANQPWRPWLSQTSRKAPDYKPYKRPADDEQHKLSIFKHPVKLFWPKSQCFDYLYEDAEVLLRNYPVQATICLYEDPDTEDEEDYSDEEDEKELR.

Residues 1 to 15 (MENITFTSGLNSEMD) are compositionally biased toward polar residues. Disordered regions lie at residues 1–42 (MENI…RPAD) and 88–109 (YEDPDTEDEEDYSDEEDEKELR). Residues 20–23 (WRPW) carry the WRPW motif motif. Positions 30–42 (KAPDYKPYKRPAD) are enriched in basic and acidic residues. The tract at residues 53 to 88 (HPVKLFWPKSQCFDYLYEDAEVLLRNYPVQATICLY) is ripply homology domain. Positions 89 to 109 (EDPDTEDEEDYSDEEDEKELR) are enriched in acidic residues.

It belongs to the ripply family. In terms of tissue distribution, first expressed in the paraxial mesoderm at the 90% epiboly stage, and subsequently confined to the presomitic mesoderm. Expressed in the rostral compartment of S-I and S-II.

The protein localises to the nucleus. Plays a role in somitogenesis. Required for somite segregation and establishment of rostrocaudal polarity in somites. In Danio rerio (Zebrafish), this protein is Protein ripply2.